A 299-amino-acid chain; its full sequence is Dihydroorotate dehydrogenase B (NAD(+)), catalytic subunit (299 aa).

FMN contacts are provided by residues Ser-19 and 43-44 (KS). Substrate contacts are provided by residues Lys-43, 67–71 (NAMGL), and Asn-121. Residue Asn-121 participates in FMN binding. Cys-124 functions as the Nucleophile in the catalytic mechanism. The FMN site is built by Lys-159 and Ile-185. 186–187 (NT) provides a ligand contact to substrate. FMN contacts are provided by residues Gly-211, 237–238 (GG), and 259–260 (GT).

Belongs to the dihydroorotate dehydrogenase family. Type 1 subfamily. As to quaternary structure, heterotetramer of 2 PyrK and 2 PyrD type B subunits. FMN serves as cofactor.

The protein localises to the cytoplasm. It catalyses the reaction (S)-dihydroorotate + NAD(+) = orotate + NADH + H(+). Its pathway is pyrimidine metabolism; UMP biosynthesis via de novo pathway; orotate from (S)-dihydroorotate (NAD(+) route): step 1/1. Its function is as follows. Catalyzes the conversion of dihydroorotate to orotate with NAD(+) as electron acceptor. This Pyrococcus abyssi (strain GE5 / Orsay) protein is Dihydroorotate dehydrogenase B (NAD(+)), catalytic subunit (pyrD).